The chain runs to 133 residues: Succinate dehydrogenase assembly factor 3, mitochondrial (133 aa).

A mitochondrion-targeting transit peptide spans 1–12 (MNNKLIYRSVRF).

It belongs to the complex I LYR family. SDHAF3 subfamily. As to quaternary structure, interacts with SDH2 within an SDH1-SDH2 subcomplex.

It localises to the mitochondrion. It is found in the mitochondrion intermembrane space. The protein resides in the mitochondrion matrix. In terms of biological role, plays an essential role in the assembly of succinate dehydrogenase (SDH), an enzyme complex (also referred to as respiratory complex II) that is a component of both the tricarboxylic acid (TCA) cycle and the mitochondrial electron transport chain, and which couples the oxidation of succinate to fumarate with the reduction of ubiquinone (coenzyme Q) to ubiquinol. Promotes maturation of the iron-sulfur protein subunit SDH2 of the SDH catalytic dimer, protecting it from the deleterious effects of oxidants. Acts together with SDHAF1 (SDH6). This is Succinate dehydrogenase assembly factor 3, mitochondrial from Saccharomyces cerevisiae (strain ATCC 204508 / S288c) (Baker's yeast).